A 620-amino-acid chain; its full sequence is 1-deoxy-D-xylulose-5-phosphate synthase (620 aa).

Thiamine diphosphate-binding positions include H80 and 121–123; that span reads GHS. D152 lines the Mg(2+) pocket. Thiamine diphosphate-binding positions include 153–154, N181, Y288, and E370; that span reads GA. N181 provides a ligand contact to Mg(2+).

This sequence belongs to the transketolase family. DXPS subfamily. Homodimer. The cofactor is Mg(2+). Thiamine diphosphate is required as a cofactor.

It carries out the reaction D-glyceraldehyde 3-phosphate + pyruvate + H(+) = 1-deoxy-D-xylulose 5-phosphate + CO2. Its pathway is metabolic intermediate biosynthesis; 1-deoxy-D-xylulose 5-phosphate biosynthesis; 1-deoxy-D-xylulose 5-phosphate from D-glyceraldehyde 3-phosphate and pyruvate: step 1/1. In terms of biological role, catalyzes the acyloin condensation reaction between C atoms 2 and 3 of pyruvate and glyceraldehyde 3-phosphate to yield 1-deoxy-D-xylulose-5-phosphate (DXP). In Cronobacter sakazakii (strain ATCC BAA-894) (Enterobacter sakazakii), this protein is 1-deoxy-D-xylulose-5-phosphate synthase.